Reading from the N-terminus, the 298-residue chain is Mitochondrial glycine transporter (298 aa).

3 Solcar repeats span residues 5-84 (TKTR…MRTA), 105-189 (LTTY…AKEV), and 211-295 (TSTL…LIKL). Helical transmembrane passes span 11–36 (LIGGFFGGLTSAVALQPLDLLKTRIQ), 59–85 (GTLPSAIRTSLGSALYLSSLNLMRTAI), 111–136 (LISGALARGAVGYMTMPVTVIKVRYE), 164–187 (GFGPTLVRDAPYSGIYVLLYEKAK), 215–241 (VNSTSAILSACLATTITAPFDTIKTRM), and 270–288 (GLSMRLTRKALSAGIAWGI).

It belongs to the mitochondrial carrier (TC 2.A.29) family. SLC25A38 subfamily.

The protein resides in the mitochondrion inner membrane. It carries out the reaction glycine(in) = glycine(out). Its function is as follows. Mitochondrial glycine transporter that imports glycine into the mitochondrial matrix. Plays an important role in providing glycine for the first enzymatic step in heme biosynthesis, the condensation of glycine with succinyl-CoA to produce 5-aminolevulinate (ALA) in the mitochondrial matrix. The polypeptide is Mitochondrial glycine transporter (Vanderwaltozyma polyspora (strain ATCC 22028 / DSM 70294 / BCRC 21397 / CBS 2163 / NBRC 10782 / NRRL Y-8283 / UCD 57-17) (Kluyveromyces polysporus)).